Reading from the N-terminus, the 202-residue chain is Histone H1 (202 aa).

2 disordered regions span residues 1 to 50 and 114 to 202; these read MTAI…VTHP and YKLS…KIAV. The segment covering 18–38 has biased composition (basic and acidic residues); the sequence is EASKVKEQAPATDKKPRAPKE. The region spanning 48–118 is the H15 domain; sequence THPPYFQMIK…KIKASYKLSE (71 aa). Residues 160–202 are compositionally biased toward basic residues; sequence KAKATPKPKKVGAKRTRKSTPAKAKQPKSIKSPAAKRAKKIAV.

The protein belongs to the histone H1/H5 family.

The protein localises to the nucleus. It localises to the chromosome. Its function is as follows. Histones H1 are necessary for the condensation of nucleosome chains into higher-order structures. This is Histone H1 from Solanum pennellii (Tomato).